Reading from the N-terminus, the 419-residue chain is UDP-N-acetylglucosamine 1-carboxyvinyltransferase (419 aa).

22 to 23 (KN) provides a ligand contact to phosphoenolpyruvate. UDP-N-acetyl-alpha-D-glucosamine is bound at residue Arg-93. Residue Cys-117 is the Proton donor of the active site. Cys-117 is subject to 2-(S-cysteinyl)pyruvic acid O-phosphothioketal. The UDP-N-acetyl-alpha-D-glucosamine site is built by Asp-306 and Ile-328.

Belongs to the EPSP synthase family. MurA subfamily.

It is found in the cytoplasm. It catalyses the reaction phosphoenolpyruvate + UDP-N-acetyl-alpha-D-glucosamine = UDP-N-acetyl-3-O-(1-carboxyvinyl)-alpha-D-glucosamine + phosphate. Its pathway is cell wall biogenesis; peptidoglycan biosynthesis. Its function is as follows. Cell wall formation. Adds enolpyruvyl to UDP-N-acetylglucosamine. This Ruthia magnifica subsp. Calyptogena magnifica protein is UDP-N-acetylglucosamine 1-carboxyvinyltransferase.